Consider the following 235-residue polypeptide: Segregation and condensation protein A (235 aa).

The protein belongs to the ScpA family. As to quaternary structure, component of a cohesin-like complex composed of ScpA, ScpB and the Smc homodimer, in which ScpA and ScpB bind to the head domain of Smc. The presence of the three proteins is required for the association of the complex with DNA.

The protein localises to the cytoplasm. In terms of biological role, participates in chromosomal partition during cell division. May act via the formation of a condensin-like complex containing Smc and ScpB that pull DNA away from mid-cell into both cell halves. The chain is Segregation and condensation protein A from Streptococcus equi subsp. equi (strain 4047).